Consider the following 413-residue polypeptide: Queuine tRNA-ribosyltransferase accessory subunit 2 (413 aa).

Positions 298 to 321 (LEKSETSGAERNGDVGAESEEPDA) are disordered. Positions 349, 351, 354, and 380 each coordinate Zn(2+).

It belongs to the queuine tRNA-ribosyltransferase family. QTRT2 subfamily. Heterodimer of a catalytic subunit qtrt1 and an accessory subunit qtrt2. Zn(2+) serves as cofactor.

The protein localises to the cytoplasm. It localises to the mitochondrion outer membrane. Functionally, non-catalytic subunit of the queuine tRNA-ribosyltransferase (TGT) that catalyzes the base-exchange of a guanine (G) residue with queuine (Q) at position 34 (anticodon wobble position) in tRNAs with GU(N) anticodons (tRNA-Asp, -Asn, -His and -Tyr), resulting in the hypermodified nucleoside queuosine (7-(((4,5-cis-dihydroxy-2-cyclopenten-1-yl)amino)methyl)-7-deazaguanosine). The protein is Queuine tRNA-ribosyltransferase accessory subunit 2 of Xenopus tropicalis (Western clawed frog).